A 239-amino-acid polypeptide reads, in one-letter code: Suppressor of organelle fusion 1 (239 aa).

This sequence belongs to the WD repeat WDR91 family. As to quaternary structure, interacts with sorf-2; the interaction is direct. Interacts with bec-1.

The protein localises to the early endosome. The protein resides in the late endosome. Its subcellular location is the cytoplasm. Functionally, together with sorf-2 negatively regulates the levels of phosphatidylinositol 3-phosphate (PtdIns3P) to enable the conversion of early endosomes to late endosomes. Binds to sorf-2 and the sorf-1-sorf-2 complex likely acts through bec-1, a non-catalytic subunit of phosphatidylinositol 3-kinase (PI3K), to suppress PI3K activity, thereby negatively regulating endosomal PtdIns3P levels. The polypeptide is Suppressor of organelle fusion 1 (Caenorhabditis elegans).